Consider the following 284-residue polypeptide: Ubiquinone biosynthesis protein COQ4, mitochondrial (284 aa).

Zn(2+) contacts are provided by histidine 165, aspartate 166, histidine 169, and glutamate 181.

The protein belongs to the COQ4 family. Component of a multi-subunit COQ enzyme complex, composed of at least COQ3, COQ4, COQ5, COQ6, COQ7 and COQ9. The cofactor is Zn(2+).

It localises to the mitochondrion inner membrane. It catalyses the reaction a 4-hydroxy-3-methoxy-5-(all-trans-polyprenyl)benzoate + H(+) = a 2-methoxy-6-(all-trans-polyprenyl)phenol + CO2. The protein operates within cofactor biosynthesis; ubiquinone biosynthesis. Functionally, lyase that catalyzes the C1-decarboxylation of 4-hydroxy-3-methoxy-5-(all-trans-polyprenyl)benzoic acid into 2-methoxy-6-(all-trans-polyprenyl)phenol during ubiquinone biosynthesis. The polypeptide is Ubiquinone biosynthesis protein COQ4, mitochondrial (Blastomyces gilchristii (strain SLH14081) (Blastomyces dermatitidis)).